The following is a 506-amino-acid chain: Cytochrome P450 6a8 (506 aa).

C451 serves as a coordination point for heme.

Belongs to the cytochrome P450 family. Heme is required as a cofactor.

The protein resides in the endoplasmic reticulum membrane. The protein localises to the microsome membrane. Its function is as follows. Involved in the metabolism of insect hormones and in the breakdown of synthetic insecticides. The chain is Cytochrome P450 6a8 (Cyp6a8) from Drosophila melanogaster (Fruit fly).